The chain runs to 297 residues: 33 kDa chaperonin (297 aa).

Intrachain disulfides connect cysteine 234–cysteine 236 and cysteine 267–cysteine 270.

Belongs to the HSP33 family. In terms of processing, under oxidizing conditions two disulfide bonds are formed involving the reactive cysteines. Under reducing conditions zinc is bound to the reactive cysteines and the protein is inactive.

Its subcellular location is the cytoplasm. In terms of biological role, redox regulated molecular chaperone. Protects both thermally unfolding and oxidatively damaged proteins from irreversible aggregation. Plays an important role in the bacterial defense system toward oxidative stress. The sequence is that of 33 kDa chaperonin from Pseudoalteromonas atlantica (strain T6c / ATCC BAA-1087).